The primary structure comprises 365 residues: 3-isopropylmalate dehydrogenase (365 aa).

Glycine 80–glutamate 91 lines the NAD(+) pocket. Substrate is bound by residues arginine 98, arginine 108, arginine 137, and aspartate 226. Residues aspartate 226, aspartate 251, and aspartate 255 each contribute to the Mg(2+) site. Residue glycine 290–asparagine 301 coordinates NAD(+).

Belongs to the isocitrate and isopropylmalate dehydrogenases family. In terms of assembly, homodimer. It depends on Mg(2+) as a cofactor. Mn(2+) serves as cofactor.

The protein localises to the cytoplasm. It catalyses the reaction (2R,3S)-3-isopropylmalate + NAD(+) = 4-methyl-2-oxopentanoate + CO2 + NADH. It participates in amino-acid biosynthesis; L-leucine biosynthesis; L-leucine from 3-methyl-2-oxobutanoate: step 3/4. Catalyzes the oxidation of 3-carboxy-2-hydroxy-4-methylpentanoate (3-isopropylmalate) to 3-carboxy-4-methyl-2-oxopentanoate. The product decarboxylates to 4-methyl-2 oxopentanoate. This Candida boidinii (Yeast) protein is 3-isopropylmalate dehydrogenase (LEU2).